A 992-amino-acid polypeptide reads, in one-letter code: Meckelin (992 aa).

The first 35 residues, Met1 to Trp35, serve as a signal peptide directing secretion. The Extracellular segment spans residues Ala36–Asp516. A cysteine-rich region spans residues Gln37–Gly280. 12 disulfide bridges follow: Cys49-Cys62, Cys65-Cys78, Cys80-Cys97, Cys100-Cys114, Cys117-Cys127, Cys129-Cys150, Cys153-Cys170, Cys173-Cys184, Cys186-Cys197, Cys237-Cys246, Cys253-Cys268, and Cys354-Cys375. Asn242 carries an N-linked (GlcNAc...) asparagine glycan. Residues Ala517–Arg545 traverse the membrane as a helical segment. Over Arg546–Gln555 the chain is Cytoplasmic. Residues Thr556 to Phe587 form a helical membrane-spanning segment. The Extracellular portion of the chain corresponds to Lys588–Pro600. A helical transmembrane segment spans residues Val601–Gln628. Residues Ile629–Thr667 lie on the Cytoplasmic side of the membrane. Positions Tyr668–Glu676 form an intramembrane region, helical. Residues Tyr668–Val698 form a discontinuously helical membrane-spanning segment. Residues Ile677 to Pro685 lie within the membrane without spanning it. Residues Leu686–Val698 constitute an intramembrane region (helical). At Val699–Leu728 the chain is on the extracellular side. An intramembrane region (helical) is located at residues Arg729–Arg754. The chain crosses the membrane as a discontinuously helical span at residues Arg729–Ser768. Residues Phe755–Lys759 lie within the membrane without spanning it. Residues Ile760 to Ser768 constitute an intramembrane region (helical). At Met769–Ser923 the chain is on the cytoplasmic side. The segment at residues Phe924–Ser926 is an intramembrane region (helical). The chain crosses the membrane as a discontinuously helical span at residues Phe924–Leu949. An intramembrane segment occupies Val927 to Glu933. Positions Ala934 to Leu949 form an intramembrane region, helical. Over Ala950–Phe954 the chain is Extracellular. The helical transmembrane segment at Val955–Thr982 threads the bilayer. Over Lys983–Ile992 the chain is Cytoplasmic.

Homodimer. Part of the tectonic-like complex (also named B9 complex). Interacts with DNAJB9, DNAJC10 and mutated SFTPC. Interacts with SYNE2 during the early establishment of cell polarity. Interacts (via C-terminus) with FLNA. Interacts with TMEM218. Interacts with WNT5A. Interacts with ROR2.

It localises to the cell membrane. The protein localises to the endoplasmic reticulum membrane. Its subcellular location is the cytoplasm. It is found in the cytoskeleton. The protein resides in the cilium basal body. In terms of biological role, part of the tectonic-like complex which is required for tissue-specific ciliogenesis and may regulate ciliary membrane composition. Involved in centrosome migration to the apical cell surface during early ciliogenesis. Required for ciliary structure and function, including a role in regulating length and appropriate number through modulating centrosome duplication. Is a key regulator of stereociliary bundle orientation. Required for epithelial cell branching morphology. Essential for endoplasmic reticulum-associated degradation (ERAD) of surfactant protein C (sftpc). Involved in the negative regulation of canonical Wnt signaling, and activation of the non-canonical cascade stimulated by WNT5A. In non-canonical Wnt signaling, it may act as ROR2 coreceptor. The polypeptide is Meckelin (Tmem67) (Rattus norvegicus (Rat)).